The primary structure comprises 352 residues: Proton-activated chloride channel (352 aa).

The disordered stretch occupies residues 1-55 (MEAIRKELSRSYQELNEEAEPVAIDPEEAEDEEKEQEEAASAVAPDRDSDRSSPP). At 1–65 (MEAIRKELSR…VRFSRTCLKN (65 aa)) the chain is on the cytoplasmic side. Positions 15-38 (LNEEAEPVAIDPEEAEDEEKEQEE) are enriched in acidic residues. The helical transmembrane segment at 66 to 86 (FFSVLLILVYLLLMGVAVFLV) threads the bilayer. Residues 87–299 (YQTITDFRDK…KDPYIQEIQD (213 aa)) are Extracellular-facing. A helical transmembrane segment spans residues 300–320 (IITANPWSMIALLCSVFLVLF). Residues 321–352 (KAADFAKLSVKWMIKVRRRHLKKRARELNHIS) are Cytoplasmic-facing.

It belongs to the proton-activated chloride channel family.

It localises to the cell membrane. It catalyses the reaction chloride(in) = chloride(out). Its function is as follows. Chloride channel gated by pH that facilitates the entry of chloride ions into cells upon exposure to extracellular acidic pH. The protein is Proton-activated chloride channel of Xenopus tropicalis (Western clawed frog).